The primary structure comprises 427 residues: Adenylosuccinate synthetase (427 aa).

Residues Gly12–Lys18 and Gly40–Thr42 each bind GTP. The active-site Proton acceptor is Asp13. The Mg(2+) site is built by Asp13 and Gly40. IMP is bound by residues Asp13–Lys16, Asn38–His41, Thr128, Arg142, Gln223, Thr238, and Arg302. His41 acts as the Proton donor in catalysis. Val298–Arg304 lines the substrate pocket. GTP contacts are provided by residues Arg304, Lys330 to Asp332, and Gly412 to Gly414.

The protein belongs to the adenylosuccinate synthetase family. Homodimer. It depends on Mg(2+) as a cofactor.

The protein resides in the cytoplasm. It catalyses the reaction IMP + L-aspartate + GTP = N(6)-(1,2-dicarboxyethyl)-AMP + GDP + phosphate + 2 H(+). Its pathway is purine metabolism; AMP biosynthesis via de novo pathway; AMP from IMP: step 1/2. In terms of biological role, plays an important role in the de novo pathway of purine nucleotide biosynthesis. Catalyzes the first committed step in the biosynthesis of AMP from IMP. In Streptomyces coelicolor (strain ATCC BAA-471 / A3(2) / M145), this protein is Adenylosuccinate synthetase.